Consider the following 250-residue polypeptide: Kallikrein-9 (250 aa).

The first 15 residues, 1-15, serve as a signal peptide directing secretion; it reads MKLGLLCALLSLLAG. The Peptidase S1 domain occupies 23–249; that stretch reads AIGAEECRPN…YLDWIQEIME (227 aa). Disulfide bonds link C29–C164, C48–C64, C136–C238, C143–C210, C175–C189, and C200–C225. Residues H63 and D111 each act as charge relay system in the active site. Residues N131 and N166 are each glycosylated (N-linked (GlcNAc...) asparagine). S204 serves as the catalytic Charge relay system. N-linked (GlcNAc...) asparagine glycosylation is present at N211.

Belongs to the peptidase S1 family. Kallikrein subfamily. In terms of tissue distribution, skin, thymus, trachea, cerebellum and spinal cord.

It is found in the secreted. The chain is Kallikrein-9 (KLK9) from Homo sapiens (Human).